The following is a 1533-amino-acid chain: Glycogen debranching enzyme (1533 aa).

Position 64 is a phosphoserine (serine 64). Residues aspartate 527, histidine 530, and aspartate 628 contribute to the active site.

The protein belongs to the glycogen debranching enzyme family. As to quaternary structure, monomer. Interacts with NHLRC1/malin. In terms of processing, ubiquitinated.

Its subcellular location is the cytoplasm. It catalyses the reaction Transfers a segment of a (1-&gt;4)-alpha-D-glucan to a new position in an acceptor, which may be glucose or a (1-&gt;4)-alpha-D-glucan.. The enzyme catalyses Hydrolysis of (1-&gt;6)-alpha-D-glucosidic branch linkages in glycogen phosphorylase limit dextrin.. In terms of biological role, multifunctional enzyme acting as 1,4-alpha-D-glucan:1,4-alpha-D-glucan 4-alpha-D-glycosyltransferase and amylo-1,6-glucosidase in glycogen degradation. The polypeptide is Glycogen debranching enzyme (AGL) (Canis lupus familiaris (Dog)).